The sequence spans 625 residues: tRNA uridine 5-carboxymethylaminomethyl modification enzyme MnmG (625 aa).

11-16 (GAGHAG) contributes to the FAD binding site. 271–285 (GPRYCPSIETKIVTF) provides a ligand contact to NAD(+).

This sequence belongs to the MnmG family. As to quaternary structure, homodimer. Heterotetramer of two MnmE and two MnmG subunits. It depends on FAD as a cofactor.

The protein resides in the cytoplasm. Functionally, NAD-binding protein involved in the addition of a carboxymethylaminomethyl (cmnm) group at the wobble position (U34) of certain tRNAs, forming tRNA-cmnm(5)s(2)U34. The chain is tRNA uridine 5-carboxymethylaminomethyl modification enzyme MnmG from Porphyromonas gingivalis (strain ATCC BAA-308 / W83).